A 474-amino-acid chain; its full sequence is Gamma-aminobutyric acid receptor subunit beta-1 (474 aa).

Residues 1–25 (MWTVQNRESLGLLSFPVMITMVCCA) form the signal peptide. Over 26–245 (HSTNEPSNMS…SFRLKRNIGY (220 aa)) the chain is Extracellular. N-linked (GlcNAc...) asparagine glycosylation is present at N105. Y122 contacts histamine. Residues C161 and C175 are joined by a disulfide bond. N-linked (GlcNAc...) asparagine glycosylation occurs at N174. Residues 181–182 (SY) and T227 contribute to the histamine site. 4-aminobutanoate is bound by residues Y182 and T227. Helical transmembrane passes span 246 to 267 (FILQTYMPSTLITILSWVSFWI), 271 to 293 (ASAARVALGITTVLTMTTISTHL), and 305 to 327 (AIDIYLMGCFVFVFLALLEYAFV). Topologically, residues 328–451 (NYIFFGKGPQ…DLTDVNSIDK (124 aa)) are cytoplasmic. Residues 452–473 (WSRMFFPITFSLFNVVYWLYYV) form a helical membrane-spanning segment.

It belongs to the ligand-gated ion channel (TC 1.A.9) family. Gamma-aminobutyric acid receptor (TC 1.A.9.5) subfamily. GABRB1 sub-subfamily. Heteropentamer, formed by a combination of alpha (GABRA1-6), beta (GABRB1-3), gamma (GABRG1-3), delta (GABRD), epsilon (GABRE), rho (GABRR1-3), pi (GABRP) and theta (GABRQ) chains, each subunit exhibiting distinct physiological and pharmacological properties. Binds UBQLN1.

The protein localises to the postsynaptic cell membrane. It is found in the cell membrane. The catalysed reaction is chloride(in) = chloride(out). Potentiated by etomidate, propofol, pregnanolone and flurazepam. Potentiated by histamine. Its function is as follows. Beta subunit of the heteropentameric ligand-gated chloride channel gated by gamma-aminobutyric acid (GABA), a major inhibitory neurotransmitter in the brain. GABA-gated chloride channels, also named GABA(A) receptors (GABAAR), consist of five subunits arranged around a central pore and contain one or two GABA active binding sites located at the alpha and beta subunit interfaces, depending on subunit composition. When activated by GABA, GABAARs selectively allow the flow of chloride anions across the cell membrane down their electrochemical gradient. Chloride influx into the postsynaptic neuron following GABAAR opening decreases the neuron ability to generate a new action potential, thereby reducing nerve transmission. Beta-containing GABAARs can simultaneously bind GABA and histamine where histamine binds at the interface of two neighboring beta subunits, which may be involved in the regulation of sleep and wakefulness. In Homo sapiens (Human), this protein is Gamma-aminobutyric acid receptor subunit beta-1.